The primary structure comprises 344 residues: MSAGIGESRTELLTWLNGLLNLNYKKIEECGTGAAYCQIMDSIYGDLPMNRVKFNATAEYEFQTNYKILQSCFSRHGIEKTVYVDKLIRCKFQDNLEFLQWLKKHWIRHKDESVYDPDARRKYRPIITNNSATKPRTVSNPTTAKRSSSTGTGSAMSGGLATRHSSLGINGSRKTSVTQGQLVAIQAELTKSQETIGSLNEEIEQYKGTVSTLEIEREFYFNKLRDIEILVHTTQDLINEGVYKFNDETITGHGNGNGGALLRFVKKVESILYATAEGFEMNDGEDELNDKNLGEHGTVPNQGGYANSNGEVNGNEGSNHDVIMQNDEGEVGVSNNLIIDEETF.

Ser-2 is modified (N-acetylserine). The Calponin-homology (CH) domain occupies 6–107; sequence GESRTELLTW…FLQWLKKHWI (102 aa). The interval 126–173 is disordered; sequence IITNNSATKPRTVSNPTTAKRSSSTGTGSAMSGGLATRHSSLGINGSR. A compositionally biased stretch (polar residues) spans 127–146; the sequence is ITNNSATKPRTVSNPTTAKR. Residues 147–159 are compositionally biased toward low complexity; that stretch reads SSSTGTGSAMSGG. Ser-157 carries the post-translational modification Phosphoserine. Polar residues predominate over residues 163–173; that stretch reads RHSSLGINGSR. The EB1 C-terminal domain maps to 188-281; sequence ELTKSQETIG…LYATAEGFEM (94 aa). The interval 292–312 is disordered; sequence NLGEHGTVPNQGGYANSNGEV.

Belongs to the MAPRE family.

The protein localises to the cytoplasm. It localises to the cytoskeleton. Functionally, binds microtubules. The protein is Protein BIM1 (BIM1) of Saccharomyces cerevisiae (strain ATCC 204508 / S288c) (Baker's yeast).